We begin with the raw amino-acid sequence, 233 residues long: Large ribosomal subunit protein uL1 (233 aa).

This sequence belongs to the universal ribosomal protein uL1 family. Part of the 50S ribosomal subunit.

Binds directly to 23S rRNA. The L1 stalk is quite mobile in the ribosome, and is involved in E site tRNA release. Functionally, protein L1 is also a translational repressor protein, it controls the translation of the L11 operon by binding to its mRNA. The protein is Large ribosomal subunit protein uL1 of Shewanella oneidensis (strain ATCC 700550 / JCM 31522 / CIP 106686 / LMG 19005 / NCIMB 14063 / MR-1).